The sequence spans 148 residues: 3-hydroxyacyl-[acyl-carrier-protein] dehydratase FabZ (148 aa).

Residue histidine 47 is part of the active site.

It belongs to the thioester dehydratase family. FabZ subfamily.

Its subcellular location is the cytoplasm. The catalysed reaction is a (3R)-hydroxyacyl-[ACP] = a (2E)-enoyl-[ACP] + H2O. Its function is as follows. Involved in unsaturated fatty acids biosynthesis. Catalyzes the dehydration of short chain beta-hydroxyacyl-ACPs and long chain saturated and unsaturated beta-hydroxyacyl-ACPs. The chain is 3-hydroxyacyl-[acyl-carrier-protein] dehydratase FabZ from Hydrogenobaculum sp. (strain Y04AAS1).